We begin with the raw amino-acid sequence, 225 residues long: Elongation factor 1-beta (225 aa).

In terms of domain architecture, GST C-terminal spans 2-84 (GFGDLKSPAG…ALGKYGPADV (83 aa)). An N6-acetyllysine modification is found at Lys7. Phosphoserine occurs at positions 8 and 42. Residues 78-115 (KYGPADVEDTTGSGATDSKDDDDIDLFGSDDEEESEEA) are disordered. Residues Thr88 and Thr93 each carry the phosphothreonine modification. Phosphoserine occurs at positions 95 and 106. Residues 96–113 (KDDDDIDLFGSDDEEESE) show a composition bias toward acidic residues. Residue Lys147 forms a Glycyl lysine isopeptide (Lys-Gly) (interchain with G-Cter in SUMO2) linkage. A Phosphoserine modification is found at Ser174.

Belongs to the EF-1-beta/EF-1-delta family. In terms of assembly, EF-1 is composed of 4 subunits: alpha, beta (alpha subunit of the eEF1B subcomplex), delta (beta subunit of the eEF1B subcomplex), and gamma (gamma subunit of the eEF1B subcomplex). Interacts with elongation factor EEF1A1. Post-translationally, phosphorylation affects the GDP/GTP exchange rate.

Its function is as follows. Catalytic subunit of the guanine nucleotide exchange factor (GEF) (eEF1B subcomplex) of the eukaryotic elongation factor 1 complex (eEF1). Stimulates the exchange of GDP for GTP on elongation factor 1A (eEF1A), probably by displacing GDP from the nucleotide binding pocket in eEF1A. The protein is Elongation factor 1-beta (EEF1B2) of Homo sapiens (Human).